Reading from the N-terminus, the 306-residue chain is Polyphosphate kinase PPK2B (306 aa).

Belongs to the polyphosphate kinase 2 (PPK2) family. Class I subfamily. In terms of assembly, homotetramer. The cofactor is Mn(2+).

It catalyses the reaction [phosphate](n) + ATP = [phosphate](n+1) + ADP. The catalysed reaction is [phosphate](n) + GTP = [phosphate](n+1) + GDP. Functionally, catalyzes the synthesis of polyP from ATP or GTP. Can also use inorganic polyphosphate (polyP) as a donor to convert ADP to ATP, but the activity is 10-fold higher in vitro for polyP synthesis than for ATP formation. The sequence is that of Polyphosphate kinase PPK2B from Corynebacterium glutamicum (strain ATCC 13032 / DSM 20300 / JCM 1318 / BCRC 11384 / CCUG 27702 / LMG 3730 / NBRC 12168 / NCIMB 10025 / NRRL B-2784 / 534).